The chain runs to 225 residues: Small ribosomal subunit protein uS7 (225 aa).

The protein belongs to the universal ribosomal protein uS7 family. As to quaternary structure, component of the small ribosomal subunit. Mature ribosomes consist of a small (40S) and a large (60S) subunit. The 40S subunit contains about 32 different proteins and 1 molecule of RNA (18S). The 60S subunit contains 45 different proteins and 3 molecules of RNA (25S, 5.8S and 5S).

The protein localises to the cytoplasm. Its function is as follows. Component of the ribosome, a large ribonucleoprotein complex responsible for the synthesis of proteins in the cell. The small ribosomal subunit (SSU) binds messenger RNAs (mRNAs) and translates the encoded message by selecting cognate aminoacyl-transfer RNA (tRNA) molecules. The large subunit (LSU) contains the ribosomal catalytic site termed the peptidyl transferase center (PTC), which catalyzes the formation of peptide bonds, thereby polymerizing the amino acids delivered by tRNAs into a polypeptide chain. The nascent polypeptides leave the ribosome through a tunnel in the LSU and interact with protein factors that function in enzymatic processing, targeting, and the membrane insertion of nascent chains at the exit of the ribosomal tunnel. This chain is Small ribosomal subunit protein uS7 (RPS5), found in Candida albicans (strain SC5314 / ATCC MYA-2876) (Yeast).